The sequence spans 261 residues: Thioesterase TesA (261 aa).

Residues S104, D208, and H236 contribute to the active site.

It belongs to the thioesterase family.

The catalysed reaction is a fatty acyl-CoA + H2O = a fatty acid + CoA + H(+). Its function is as follows. Involved in the synthesis of both phthiocerol dimycocerosates (PDIMs) and phenolic glycolipids (PGLs), which are structurally related lipids non-covalently bound to the outer cell wall layer of M.tuberculosis and are important virulence factors. This Mycobacterium leprae (strain TN) protein is Thioesterase TesA (tesA).